Consider the following 131-residue polypeptide: UPF0102 protein CYA_0708 (131 aa).

The protein belongs to the UPF0102 family.

This is UPF0102 protein CYA_0708 from Synechococcus sp. (strain JA-3-3Ab) (Cyanobacteria bacterium Yellowstone A-Prime).